A 197-amino-acid chain; its full sequence is Imidazoleglycerol-phosphate dehydratase (197 aa).

Belongs to the imidazoleglycerol-phosphate dehydratase family.

It is found in the cytoplasm. The enzyme catalyses D-erythro-1-(imidazol-4-yl)glycerol 3-phosphate = 3-(imidazol-4-yl)-2-oxopropyl phosphate + H2O. Its pathway is amino-acid biosynthesis; L-histidine biosynthesis; L-histidine from 5-phospho-alpha-D-ribose 1-diphosphate: step 6/9. The protein is Imidazoleglycerol-phosphate dehydratase of Nitrosomonas europaea (strain ATCC 19718 / CIP 103999 / KCTC 2705 / NBRC 14298).